Reading from the N-terminus, the 197-residue chain is Imidazoleglycerol-phosphate dehydratase (197 aa).

Belongs to the imidazoleglycerol-phosphate dehydratase family.

Its subcellular location is the cytoplasm. It carries out the reaction D-erythro-1-(imidazol-4-yl)glycerol 3-phosphate = 3-(imidazol-4-yl)-2-oxopropyl phosphate + H2O. It functions in the pathway amino-acid biosynthesis; L-histidine biosynthesis; L-histidine from 5-phospho-alpha-D-ribose 1-diphosphate: step 6/9. This Rhodopseudomonas palustris (strain BisA53) protein is Imidazoleglycerol-phosphate dehydratase.